We begin with the raw amino-acid sequence, 174 residues long: Peptide deformylase (174 aa).

Residues Cys-98 and His-140 each contribute to the Fe cation site. The active site involves Glu-141. His-144 provides a ligand contact to Fe cation.

The protein belongs to the polypeptide deformylase family. It depends on Fe(2+) as a cofactor.

It catalyses the reaction N-terminal N-formyl-L-methionyl-[peptide] + H2O = N-terminal L-methionyl-[peptide] + formate. In terms of biological role, removes the formyl group from the N-terminal Met of newly synthesized proteins. Requires at least a dipeptide for an efficient rate of reaction. N-terminal L-methionine is a prerequisite for activity but the enzyme has broad specificity at other positions. This chain is Peptide deformylase, found in Bradyrhizobium diazoefficiens (strain JCM 10833 / BCRC 13528 / IAM 13628 / NBRC 14792 / USDA 110).